A 247-amino-acid chain; its full sequence is ATP synthase subunit a, chloroplastic (247 aa).

Helical transmembrane passes span 38-58 (QVLI…ALAV), 95-115 (VPFI…GALL), 134-154 (INTT…AGLA), 199-219 (LVVV…VMFL), and 220-240 (GLFT…AYIG).

Belongs to the ATPase A chain family. As to quaternary structure, F-type ATPases have 2 components, CF(1) - the catalytic core - and CF(0) - the membrane proton channel. CF(1) has five subunits: alpha(3), beta(3), gamma(1), delta(1), epsilon(1). CF(0) has four main subunits: a, b, b' and c.

Its subcellular location is the plastid. The protein resides in the chloroplast thylakoid membrane. In terms of biological role, key component of the proton channel; it plays a direct role in the translocation of protons across the membrane. The polypeptide is ATP synthase subunit a, chloroplastic (Trachelium caeruleum (Blue throatwort)).